The primary structure comprises 109 residues: Meiotically up-regulated gene 153 protein (109 aa).

The protein resides in the mitochondrion. Has a role in meiosis. The chain is Meiotically up-regulated gene 153 protein (mug153) from Schizosaccharomyces pombe (strain 972 / ATCC 24843) (Fission yeast).